The primary structure comprises 840 residues: Lon protease homolog 2, peroxisomal (840 aa).

One can recognise a Lon N-terminal domain in the interval 13–222 (LPLLCTHDGV…KALPLLTRQI (210 aa)). 375-382 (GPPGVGKT) serves as a coordination point for ATP. Residues 583 to 606 (QKVSRSEAPTEQHAEQNTDSKVED) are disordered. Residues 584 to 606 (KVSRSEAPTEQHAEQNTDSKVED) are compositionally biased toward basic and acidic residues. Positions 641–825 (LTLPGVAIGL…DEVLNAAFDG (185 aa)) constitute a Lon proteolytic domain. Active-site residues include Ser-731 and Lys-774. The Microbody targeting signal signature appears at 838-840 (SKL).

This sequence belongs to the peptidase S16 family.

The protein localises to the peroxisome matrix. The catalysed reaction is Hydrolysis of proteins in presence of ATP.. ATP-dependent serine protease that mediates the selective degradation of misfolded and unassembled polypeptides in the peroxisomal matrix. Necessary for type 2 peroxisome targeting signal (PTS2)-containing protein processing and facilitates peroxisome matrix protein import. The polypeptide is Lon protease homolog 2, peroxisomal (lonp2) (Danio rerio (Zebrafish)).